Reading from the N-terminus, the 481-residue chain is MSKVLTSLPTGERVGIAFSGGLDTSVAVAWMRDKGAVPCTYTADIGQYDEPDIASVPDRAKTYGAEVARLVDCRAALVEEGLAALTCGAFHIRSGGRAYFNTTPLGRAVTGTLLVRAMLEDDVQIWGDGSTFKGNDIERFYRYGLLANPQLRIYKPWLDADFVTELGGRKEMSEWLVAHDLPYRDSTEKAYSTDANIWGATHEAKTLEHLDTGVETVEPIMGVRFWDPSVEIAPEDVTIGFDQGRPVTINGKEFASAVDLVMEANAVGGRHGMGMSDQIENRIIEAKSRGIYEAPGMALLHAAYERLVNAIHNEDTLAQYHTEGRRLGRLMYEGRWLDPQSLMIRESLQRWVGSAVTGEVTLRLRRGEDYSILDTTGPAFSYHPDKLSMERTEDSAFGPVDRIGQLTMRNLDIADSRAKLEQYAGLGLIGTANPAIGAAQAAATGLIGAMPEGGAQAIASRGEVSADDELLDRAAMESGTD.

ATP is bound by residues 17–25 (AFSGGLDTS) and Ala-43. Residue Tyr-99 participates in L-citrulline binding. ATP contacts are provided by Gly-129 and Thr-131. L-aspartate contacts are provided by Thr-131, Asn-135, and Asp-136. Asn-135 contributes to the L-citrulline binding site. Asp-136 provides a ligand contact to ATP. Residues Arg-139 and Ser-192 each coordinate L-citrulline. Residue Asp-194 participates in ATP binding. 3 residues coordinate L-citrulline: Thr-201, Glu-203, and Glu-280.

The protein belongs to the argininosuccinate synthase family. Type 2 subfamily. As to quaternary structure, homotetramer.

The protein resides in the cytoplasm. It carries out the reaction L-citrulline + L-aspartate + ATP = 2-(N(omega)-L-arginino)succinate + AMP + diphosphate + H(+). It functions in the pathway amino-acid biosynthesis; L-arginine biosynthesis; L-arginine from L-ornithine and carbamoyl phosphate: step 2/3. The protein is Argininosuccinate synthase (argG) of Streptomyces coelicolor (strain ATCC BAA-471 / A3(2) / M145).